The primary structure comprises 284 residues: D-tagatose-1,6-bisphosphate aldolase subunit GatY (284 aa).

Residue Asp82 is the Proton donor of the active site. Zn(2+) is bound by residues His83 and His180. Gly181 contacts dihydroxyacetone phosphate. His208 serves as a coordination point for Zn(2+). Residues 209–211 (GAS) and 230–233 (NVAT) contribute to the dihydroxyacetone phosphate site.

This sequence belongs to the class II fructose-bisphosphate aldolase family. TagBP aldolase GatY subfamily. In terms of assembly, forms a complex with GatZ. It depends on Zn(2+) as a cofactor.

The enzyme catalyses D-tagatofuranose 1,6-bisphosphate = D-glyceraldehyde 3-phosphate + dihydroxyacetone phosphate. Its pathway is carbohydrate metabolism; D-tagatose 6-phosphate degradation; D-glyceraldehyde 3-phosphate and glycerone phosphate from D-tagatose 6-phosphate: step 2/2. Functionally, catalytic subunit of the tagatose-1,6-bisphosphate aldolase GatYZ, which catalyzes the reversible aldol condensation of dihydroxyacetone phosphate (DHAP or glycerone-phosphate) with glyceraldehyde 3-phosphate (G3P) to produce tagatose 1,6-bisphosphate (TBP). Requires GatZ subunit for full activity and stability. Is involved in the catabolism of galactitol. This Salmonella choleraesuis (strain SC-B67) protein is D-tagatose-1,6-bisphosphate aldolase subunit GatY.